Reading from the N-terminus, the 246-residue chain is NAD(P)H-quinone oxidoreductase subunit K (246 aa).

[4Fe-4S] cluster contacts are provided by Cys-62, Cys-63, Cys-127, and Cys-158.

The protein belongs to the complex I 20 kDa subunit family. As to quaternary structure, NDH-1 can be composed of about 15 different subunits; different subcomplexes with different compositions have been identified which probably have different functions. [4Fe-4S] cluster is required as a cofactor.

The protein localises to the cellular thylakoid membrane. It carries out the reaction a plastoquinone + NADH + (n+1) H(+)(in) = a plastoquinol + NAD(+) + n H(+)(out). The catalysed reaction is a plastoquinone + NADPH + (n+1) H(+)(in) = a plastoquinol + NADP(+) + n H(+)(out). In terms of biological role, NDH-1 shuttles electrons from an unknown electron donor, via FMN and iron-sulfur (Fe-S) centers, to quinones in the respiratory and/or the photosynthetic chain. The immediate electron acceptor for the enzyme in this species is believed to be plastoquinone. Couples the redox reaction to proton translocation, and thus conserves the redox energy in a proton gradient. Cyanobacterial NDH-1 also plays a role in inorganic carbon-concentration. The sequence is that of NAD(P)H-quinone oxidoreductase subunit K from Parasynechococcus marenigrum (strain WH8102).